The primary structure comprises 248 residues: 3-deoxy-manno-octulosonate cytidylyltransferase (248 aa).

The protein belongs to the KdsB family.

The protein localises to the cytoplasm. It carries out the reaction 3-deoxy-alpha-D-manno-oct-2-ulosonate + CTP = CMP-3-deoxy-beta-D-manno-octulosonate + diphosphate. It functions in the pathway nucleotide-sugar biosynthesis; CMP-3-deoxy-D-manno-octulosonate biosynthesis; CMP-3-deoxy-D-manno-octulosonate from 3-deoxy-D-manno-octulosonate and CTP: step 1/1. It participates in bacterial outer membrane biogenesis; lipopolysaccharide biosynthesis. Activates KDO (a required 8-carbon sugar) for incorporation into bacterial lipopolysaccharide in Gram-negative bacteria. The chain is 3-deoxy-manno-octulosonate cytidylyltransferase from Shigella flexneri.